We begin with the raw amino-acid sequence, 931 residues long: G patch domain-containing protein 1 (931 aa).

Disordered stretches follow at residues 1 to 41 (MAAR…TVRD), 73 to 92 (PSTFVSSRQNRADKSVLGPE), and 169 to 209 (QGVG…EDDD). The residue at position 2 (Ala-2) is an N-acetylalanine. Residues Ser-6 and Ser-8 each carry the phosphoserine modification. In terms of domain architecture, G-patch spans 152-198 (KLSVGFELLRKMGWKEGQGVGPRVKRRPRRQKPDPGVKIYGCALPPG). A Glycyl lysine isopeptide (Lys-Gly) (interchain with G-Cter in SUMO2) cross-link involves residue Lys-312. A phosphoserine mark is found at Ser-357 and Ser-477. 2 disordered regions span residues 568-595 (RFTHAKEEDDSDQVEVPRDQENDVGDKQ) and 659-931 (LPTT…LRRQ). The segment covering 582 to 593 (EVPRDQENDVGD) has biased composition (basic and acidic residues). Residues 659–668 (LPTTQASSEK) show a composition bias toward polar residues. The segment covering 669–695 (VSQHRGPDKSRKPSRWDTSKHEKKEDS) has biased composition (basic and acidic residues). Phosphoserine is present on Ser-715. Residues 769 to 780 (SEDEQGDSEDDQ) show a composition bias toward acidic residues. The segment covering 786–802 (ANFQSSQDTDLGETSSV) has biased composition (polar residues). A compositionally biased stretch (basic residues) spans 852 to 888 (EKHKKNKDKHKAKKEHRRKKEKKKKHRKHKHKGKQKN). The segment covering 896 to 905 (SSESSDSSDS) has biased composition (low complexity). Positions 922-931 (RLKSLPLRRQ) are enriched in basic residues.

This sequence belongs to the GPATCH1 family.

In Homo sapiens (Human), this protein is G patch domain-containing protein 1 (GPATCH1).